Consider the following 802-residue polypeptide: Receptor-type tyrosine-protein phosphatase alpha (802 aa).

The signal sequence occupies residues 1–19 (MDSWFILVLLGSGLICVSA). Topologically, residues 20 to 151 (NNATTVAPSV…DSKDRRDETP (132 aa)) are extracellular. Asn-21 and Asn-36 each carry an N-linked (GlcNAc...) asparagine glycan. The disordered stretch occupies residues 39–59 (TAEPVKEEAKTSNPTSSLTSL). Asn-68, Asn-80, Asn-86, Asn-104, and Asn-124 each carry an N-linked (GlcNAc...) asparagine glycan. Polar residues-rich tracts occupy residues 79–115 (VNSSDSDNGTTRTASTNSIGITISPNGTWLPDNQFTD) and 123–141 (GNSSTAATTPETFPPSGNS). A disordered region spans residues 79 to 146 (VNSSDSDNGT…PSGNSDSKDR (68 aa)). Residues 152-174 (IIAVMVALSSLLVIVFIIIVLYM) form a helical membrane-spanning segment. The Cytoplasmic segment spans residues 175-802 (LRFKKYKQAG…DAFSDYANFK (628 aa)). A phosphoserine mark is found at Ser-211 and Ser-213. Tyrosine-protein phosphatase domains lie at 241-501 (FREE…LLEH) and 533-791 (LEEE…VQEY). Residues Asp-410, 442–448 (CSAGVGR), and Gln-486 contribute to the substrate site. The Phosphocysteine intermediate role is filled by Cys-442. Cys-732 functions as the Phosphocysteine intermediate in the catalytic mechanism. Residue Tyr-798 is modified to Phosphotyrosine.

This sequence belongs to the protein-tyrosine phosphatase family. Receptor class 4 subfamily. As to quaternary structure, part of a complex comprised of PTPRA, BCAR1, BCAR3 (via SH2 domain), and SRC. Within the complex, interacts (when phosphorylated on Tyr-798) with BCAR3 (via SH2 domain). Interacts with GRB2. Post-translationally, integrin binding to extracellular matrix induces phosphorylation at Tyr-798 which induces PTPRA localization and recruitment of BCAR3, BCAR1 and CRK to focal adhesions.

It is found in the cell membrane. The protein resides in the cell junction. Its subcellular location is the focal adhesion. It catalyses the reaction O-phospho-L-tyrosyl-[protein] + H2O = L-tyrosyl-[protein] + phosphate. Functionally, tyrosine protein phosphatase which is involved in integrin-mediated focal adhesion formation. Following integrin engagement, specifically recruits BCAR3, BCAR1 and CRK to focal adhesions thereby promoting SRC-mediated phosphorylation of BRAC1 and the subsequent activation of PAK and small GTPase RAC1 and CDC42. This is Receptor-type tyrosine-protein phosphatase alpha (PTPRA) from Homo sapiens (Human).